The sequence spans 337 residues: Glyceraldehyde-3-phosphate dehydrogenase (337 aa).

NAD(+) contacts are provided by residues 13–14, aspartate 35, and arginine 80; that span reads RI. D-glyceraldehyde 3-phosphate contacts are provided by residues 150–152, threonine 181, 210–211, and arginine 233; these read SCT and TG. Cysteine 151 (nucleophile) is an active-site residue. Asparagine 315 provides a ligand contact to NAD(+).

This sequence belongs to the glyceraldehyde-3-phosphate dehydrogenase family. As to quaternary structure, homotetramer.

It is found in the cytoplasm. It carries out the reaction D-glyceraldehyde 3-phosphate + phosphate + NAD(+) = (2R)-3-phospho-glyceroyl phosphate + NADH + H(+). Its pathway is carbohydrate degradation; glycolysis; pyruvate from D-glyceraldehyde 3-phosphate: step 1/5. This chain is Glyceraldehyde-3-phosphate dehydrogenase (GPDA), found in Colletotrichum lindemuthianum (Bean anthracnose fungus).